We begin with the raw amino-acid sequence, 395 residues long: E3 ubiquitin-protein ligase RNFT1 (395 aa).

2 disordered regions span residues 1–58 (MQAS…SSRN) and 78–97 (YSHS…GEHG). 6 helical membrane passes run 118–138 (ILIL…LGIG), 165–185 (CAWL…TFHS), 193–213 (IFLN…IVGI), 216–236 (FILK…PSFI), 258–278 (IFVP…FGNV), and 283–303 (LGIL…FGHL). Positions 328 to 379 (CSDMDGICTICQAEFQKPVLLFCQHIFCEECITLWFNREKTCPLCRTVISEC) are required for ubiquitin ligase activity and for protection against ER stress-induced cell death. Residues 335–373 (CTICQAEFQKPVLLFCQHIFCEECITLWFNREKTCPLCR) form an RING-type zinc finger.

In terms of tissue distribution, predominantly expressed in testis.

The protein localises to the early endosome membrane. It catalyses the reaction S-ubiquitinyl-[E2 ubiquitin-conjugating enzyme]-L-cysteine + [acceptor protein]-L-lysine = [E2 ubiquitin-conjugating enzyme]-L-cysteine + N(6)-ubiquitinyl-[acceptor protein]-L-lysine.. Its pathway is protein modification; protein ubiquitination. Its function is as follows. E3 ubiquitin-protein ligase that acts in the endoplasmic reticulum (ER)-associated degradation (ERAD) pathway, which targets misfolded proteins that accumulate in the endoplasmic reticulum (ER) for ubiquitination and subsequent proteasome-mediated degradation. Protects cells from ER stress-induced apoptosis. The protein is E3 ubiquitin-protein ligase RNFT1 (Rnft1) of Mus musculus (Mouse).